A 328-amino-acid polypeptide reads, in one-letter code: Malate dehydrogenase (328 aa).

12 to 18 (GAAGQIG) is a binding site for NAD(+). The substrate site is built by Arg95 and Arg101. Residues Asn108, Gln115, and 132-134 (VGN) contribute to the NAD(+) site. Substrate contacts are provided by Asn134 and Arg165. The active-site Proton acceptor is His190.

The protein belongs to the LDH/MDH superfamily. MDH type 2 family.

It carries out the reaction (S)-malate + NAD(+) = oxaloacetate + NADH + H(+). In terms of biological role, catalyzes the reversible oxidation of malate to oxaloacetate. The polypeptide is Malate dehydrogenase (Leptothrix cholodnii (strain ATCC 51168 / LMG 8142 / SP-6) (Leptothrix discophora (strain SP-6))).